The primary structure comprises 303 residues: N-acetyl-D-glucosamine kinase (303 aa).

Residues 4–11 (GFDIGGTK) and 133–140 (GVGGGLVL) each bind ATP. His-157, Cys-177, Cys-179, and Cys-184 together coordinate Zn(2+).

This sequence belongs to the ROK (NagC/XylR) family. NagK subfamily.

It carries out the reaction N-acetyl-D-glucosamine + ATP = N-acetyl-D-glucosamine 6-phosphate + ADP + H(+). The protein operates within cell wall biogenesis; peptidoglycan recycling. In terms of biological role, catalyzes the phosphorylation of N-acetyl-D-glucosamine (GlcNAc) derived from cell-wall degradation, yielding GlcNAc-6-P. This is N-acetyl-D-glucosamine kinase from Salmonella dublin (strain CT_02021853).